Here is a 266-residue protein sequence, read N- to C-terminus: Indole-3-glycerol phosphate synthase (266 aa).

Belongs to the TrpC family.

The catalysed reaction is 1-(2-carboxyphenylamino)-1-deoxy-D-ribulose 5-phosphate + H(+) = (1S,2R)-1-C-(indol-3-yl)glycerol 3-phosphate + CO2 + H2O. It participates in amino-acid biosynthesis; L-tryptophan biosynthesis; L-tryptophan from chorismate: step 4/5. The polypeptide is Indole-3-glycerol phosphate synthase (Janthinobacterium sp. (strain Marseille) (Minibacterium massiliensis)).